The sequence spans 256 residues: GTP cyclohydrolase FolE2 (256 aa).

It belongs to the GTP cyclohydrolase IV family.

The enzyme catalyses GTP + H2O = 7,8-dihydroneopterin 3'-triphosphate + formate + H(+). The protein operates within cofactor biosynthesis; 7,8-dihydroneopterin triphosphate biosynthesis; 7,8-dihydroneopterin triphosphate from GTP: step 1/1. Converts GTP to 7,8-dihydroneopterin triphosphate. The sequence is that of GTP cyclohydrolase FolE2 from Caldicellulosiruptor bescii (strain ATCC BAA-1888 / DSM 6725 / KCTC 15123 / Z-1320) (Anaerocellum thermophilum).